The sequence spans 427 residues: UPF0229 protein YeaH (427 aa).

A compositionally biased stretch (basic and acidic residues) spans 79–90; that stretch reads NDHFVQNDRIER. The interval 79–110 is disordered; sequence NDHFVQNDRIERPQGGGGGSGSGQGQASQDGE. Positions 92 to 102 are enriched in gly residues; sequence QGGGGGSGSGQ.

The protein belongs to the UPF0229 family.

This chain is UPF0229 protein YeaH, found in Shigella boydii serotype 18 (strain CDC 3083-94 / BS512).